The sequence spans 322 residues: Anthranilate phosphoribosyltransferase (322 aa).

Residues G71, 74–75 (GD), T79, 81–84 (NVST), 99–107 (KFGNRSASG), and A111 contribute to the 5-phospho-alpha-D-ribose 1-diphosphate site. G71 contacts anthranilate. S83 contributes to the Mg(2+) binding site. N102 serves as a coordination point for anthranilate. Anthranilate is bound at residue R157. The Mg(2+) site is built by D215 and E216.

It belongs to the anthranilate phosphoribosyltransferase family. Homodimer. Mg(2+) serves as cofactor.

It carries out the reaction N-(5-phospho-beta-D-ribosyl)anthranilate + diphosphate = 5-phospho-alpha-D-ribose 1-diphosphate + anthranilate. It participates in amino-acid biosynthesis; L-tryptophan biosynthesis; L-tryptophan from chorismate: step 2/5. Its function is as follows. Catalyzes the transfer of the phosphoribosyl group of 5-phosphorylribose-1-pyrophosphate (PRPP) to anthranilate to yield N-(5'-phosphoribosyl)-anthranilate (PRA). This Thermoplasma acidophilum (strain ATCC 25905 / DSM 1728 / JCM 9062 / NBRC 15155 / AMRC-C165) protein is Anthranilate phosphoribosyltransferase.